A 156-amino-acid polypeptide reads, in one-letter code: Putative pre-16S rRNA nuclease (156 aa).

This sequence belongs to the YqgF nuclease family.

Its subcellular location is the cytoplasm. Functionally, could be a nuclease involved in processing of the 5'-end of pre-16S rRNA. This chain is Putative pre-16S rRNA nuclease, found in Ehrlichia ruminantium (strain Welgevonden).